A 755-amino-acid chain; its full sequence is Beta-galactosidase (755 aa).

The active-site Proton donor is Glu382. Glu463 (nucleophile) is an active-site residue.

Belongs to the glycosyl hydrolase 2 family.

It catalyses the reaction Hydrolysis of terminal non-reducing beta-D-galactose residues in beta-D-galactosides.. In Rhizobium meliloti (Ensifer meliloti), this protein is Beta-galactosidase (lacZ).